The sequence spans 165 residues: Small ribosomal subunit protein bS16 (165 aa).

Residues 110 to 165 (LSEANNGPTAEAITEKKKKAREDKEAKEAAEKAAAEKAAAAESEEAPAEEAAAEEA) are disordered. Over residues 129–144 (AREDKEAKEAAEKAAA) the composition is skewed to basic and acidic residues. Acidic residues predominate over residues 151 to 165 (ESEEAPAEEAAAEEA).

The protein belongs to the bacterial ribosomal protein bS16 family.

The sequence is that of Small ribosomal subunit protein bS16 from Corynebacterium glutamicum (strain R).